Here is a 466-residue protein sequence, read N- to C-terminus: Cysteine--tRNA ligase (466 aa).

Residue cysteine 28 coordinates Zn(2+). The short motif at proline 30–asparagine 40 is the 'HIGH' region element. The Zn(2+) site is built by cysteine 208, histidine 233, and glutamate 237. The 'KMSKS' region signature appears at lysine 265–serine 269. Lysine 268 is a binding site for ATP. Phosphoserine is present on serine 269.

This sequence belongs to the class-I aminoacyl-tRNA synthetase family. In terms of assembly, monomer. It depends on Zn(2+) as a cofactor.

It is found in the cytoplasm. The catalysed reaction is tRNA(Cys) + L-cysteine + ATP = L-cysteinyl-tRNA(Cys) + AMP + diphosphate. The sequence is that of Cysteine--tRNA ligase from Shouchella clausii (strain KSM-K16) (Alkalihalobacillus clausii).